We begin with the raw amino-acid sequence, 463 residues long: Asparagine--tRNA ligase (463 aa).

The protein belongs to the class-II aminoacyl-tRNA synthetase family. As to quaternary structure, homodimer.

Its subcellular location is the cytoplasm. The catalysed reaction is tRNA(Asn) + L-asparagine + ATP = L-asparaginyl-tRNA(Asn) + AMP + diphosphate + H(+). The sequence is that of Asparagine--tRNA ligase from Alkaliphilus metalliredigens (strain QYMF).